Consider the following 301-residue polypeptide: MFKRKSTAELAAQMAKLNGNKGFSSEDKGEWKLKLDNAGNGQAVIRFLPSKNDEQAPFAILVNHGFKKNGKWYIETCSSTHGDYDSCPVCQYISKNDLYNTDNKEYSLVKRKTSYWANILVVKDPAAPENEGKVFKYRFGKKIWDKINAMIAVDVEMGETPVDVTCPWEGANFVLKVKQVSGFSNYDESKFLNQSAIPNIDDESFQKELFEQMVDLSEMTSKDKFKSFEELNTKFGQVMGTAVMGGAAATAAKKADKVADDLDAFNVDDFNTKTEDDFMSSSSGSSSSADDTDLDDLLNDL.

The interval 3 to 7 (KRKST) is LAST. The Zn(2+) site is built by H64, C77, C87, and C90. Positions 272-301 (TKTEDDFMSSSSGSSSSADDTDLDDLLNDL) are disordered. Residues 279 to 289 (MSSSSGSSSSA) show a composition bias toward low complexity. The segment covering 290-301 (DDTDLDDLLNDL) has biased composition (acidic residues).

This sequence belongs to the Tequatrovirus single-stranded DNA-binding protein family. As to quaternary structure, homodimer in the absence of DNA, monomer when binding DNA. Interacts with the DNA helicase assembly protein; a ternary complex between the helicase assembly protein, the single-stranded DNA-binding protein and ssDNA is an obligatory intermediate in the helicase loading mechanism. Part of the replicase complex that includes the DNA polymerase, the polymerase clamp, the clamp loader complex, the single-stranded DNA binding protein, the primase, the DnaB-like SF4 replicative helicase and the helicase assembly factor. Interacts (via C-terminus) with the viral SF1 dDA helicase. Interacts with the viral SF2 UvsW repair helicase.

Single-stranded DNA-binding protein that participates in viral DNA replication, recombination, and repair. Coats the lagging-strand ssDNA as the replication fork advances. Stimulates the activities of viral DNA polymerase and DnaB-like SF4 replicative helicase, probably via its interaction with the helicase assembly factor. Stimulates the unwinding activity of UvsW helicase, inhibits it DNA winding activity. Together with DnaB-like SF4 replicative helicase and the helicase assembly factor, promotes pairing of two homologous DNA molecules containing complementary single-stranded regions and mediates homologous DNA strand exchange. Also promotes the formation of joint molecules. mRNA specific autogenous translational repressor. This Escherichia coli (Bacteriophage T4) protein is Single-stranded DNA-binding protein.